A 942-amino-acid chain; its full sequence is DDB1- and CUL4-associated factor 5 (942 aa).

6 WD repeats span residues Gly51–Val91, Glu99–Phe139, Ala140–Pro180, Asn185–Leu225, Phe277–Gly317, and Gly331–Gly370. Disordered stretches follow at residues Gly449 to Asp478 and Thr490 to Arg509. Residues Ser454–Leu465 are compositionally biased toward polar residues. Residue Thr500 is modified to Phosphothreonine. Phosphoserine is present on residues Ser531, Ser533, Ser626, Ser628, Ser645, Ser648, and Ser651. Disordered stretches follow at residues Thr544 to Ser655, Asn676 to Ser824, and Ala889 to Thr942. Residues Leu625 to Glu641 show a composition bias toward low complexity. Composition is skewed to basic and acidic residues over residues Asp690 to Asn701 and Cys728 to Pro738. Residues Gly760–Ser770 are compositionally biased toward polar residues. Ser794 bears the Phosphoserine mark. Positions Ser801–Thr815 are enriched in polar residues.

Interacts with DDB1, CUL4A or CUL4B. Interacts with L3MBTL3. Interacts with DNMT1. Interacts with E2F1. Interacts with SOX2. As to expression, ubiquitous.

It participates in protein modification; protein ubiquitination. Functionally, is a substrate receptor for the CUL4-DDB1 E3 ubiquitin-protein ligase complex (CRL4). The complex CRL4-DCAF5 is involved in the ubiquitination of a set of methylated non-histone proteins, including SOX2, DNMT1 and E2F1. This Homo sapiens (Human) protein is DDB1- and CUL4-associated factor 5 (DCAF5).